A 466-amino-acid chain; its full sequence is RUS family member 1 (466 aa).

Alanine 2 is modified (N-acetylalanine). The helical transmembrane segment at leucine 245–leucine 265 threads the bilayer.

The protein belongs to the RUS1 family.

The protein localises to the membrane. This chain is RUS family member 1 (Rusf1), found in Rattus norvegicus (Rat).